The primary structure comprises 295 residues: ATP synthase gamma chain (295 aa).

This sequence belongs to the ATPase gamma chain family. F-type ATPases have 2 components, CF(1) - the catalytic core - and CF(0) - the membrane proton channel. CF(1) has five subunits: alpha(3), beta(3), gamma(1), delta(1), epsilon(1). CF(0) has three main subunits: a, b and c.

The protein resides in the cell inner membrane. Its function is as follows. Produces ATP from ADP in the presence of a proton gradient across the membrane. The gamma chain is believed to be important in regulating ATPase activity and the flow of protons through the CF(0) complex. The polypeptide is ATP synthase gamma chain (Campylobacter curvus (strain 525.92)).